The primary structure comprises 345 residues: Probable 3'(2'),5'-bisphosphate nucleotidase 4 (345 aa).

Residue aspartate 46 is the Proton acceptor of the active site. Mg(2+) is bound by residues glutamate 71, aspartate 134, valine 136, and aspartate 137. The Proton acceptor role is filled by threonine 139. Adenosine 3',5'-bisphosphate-binding residues include threonine 139, serine 247, lysine 250, and arginine 264. Residues serine 247, lysine 250, and arginine 264 each coordinate AMP.

Belongs to the inositol monophosphatase superfamily. It depends on Mg(2+) as a cofactor.

It catalyses the reaction 3'-phosphoadenylyl sulfate + H2O = adenosine 5'-phosphosulfate + phosphate. The enzyme catalyses adenosine 3',5'-bisphosphate + H2O = AMP + phosphate. The catalysed reaction is adenosine 2',5'-bisphosphate + H2O = AMP + phosphate. It carries out the reaction 1D-myo-inositol 1,4-bisphosphate + H2O = 1D-myo-inositol 4-phosphate + phosphate. It catalyses the reaction 1D-myo-inositol 1,3,4-trisphosphate + H2O = 1D-myo-inositol 3,4-bisphosphate + phosphate. The protein operates within signal transduction; phosphatidylinositol signaling pathway. Functionally, phosphatase that converts adenosine 3'-phosphate 5'-phosphosulfate (PAPS) to adenosine 5'-phosphosulfate (APS) and 3'(2')-phosphoadenosine 5'-phosphate (PAP) to AMP. Is also able to hydrolyze inositol 1,4-bisphosphate and inositol 1,3,4-trisphosphate. In Arabidopsis thaliana (Mouse-ear cress), this protein is Probable 3'(2'),5'-bisphosphate nucleotidase 4 (SAL4).